A 663-amino-acid chain; its full sequence is Transketolase 2 (663 aa).

Residue histidine 25 participates in substrate binding. Residues histidine 65 and 113-115 (GPL) each bind thiamine diphosphate. Position 154 (aspartate 154) interacts with Mg(2+). Residues glycine 155 and asparagine 184 each contribute to the thiamine diphosphate site. Mg(2+) is bound by residues asparagine 184 and isoleucine 186. Positions 259, 356, and 383 each coordinate substrate. Histidine 259 is a binding site for thiamine diphosphate. Glutamate 410 (proton donor) is an active-site residue. Phenylalanine 436 is a thiamine diphosphate binding site. Positions 460, 468, and 519 each coordinate substrate.

It belongs to the transketolase family. As to quaternary structure, homodimer. Mg(2+) is required as a cofactor. The cofactor is Ca(2+). It depends on Mn(2+) as a cofactor. Requires Co(2+) as cofactor. Thiamine diphosphate serves as cofactor.

The enzyme catalyses D-sedoheptulose 7-phosphate + D-glyceraldehyde 3-phosphate = aldehydo-D-ribose 5-phosphate + D-xylulose 5-phosphate. Catalyzes the transfer of a two-carbon ketol group from a ketose donor to an aldose acceptor, via a covalent intermediate with the cofactor thiamine pyrophosphate. This is Transketolase 2 (tkt2) from Vibrio vulnificus (strain CMCP6).